A 156-amino-acid polypeptide reads, in one-letter code: Small ribosomal subunit protein uS7 (156 aa).

The protein belongs to the universal ribosomal protein uS7 family. Part of the 30S ribosomal subunit. Contacts proteins S9 and S11.

In terms of biological role, one of the primary rRNA binding proteins, it binds directly to 16S rRNA where it nucleates assembly of the head domain of the 30S subunit. Is located at the subunit interface close to the decoding center, probably blocks exit of the E-site tRNA. In Methylorubrum extorquens (strain CM4 / NCIMB 13688) (Methylobacterium extorquens), this protein is Small ribosomal subunit protein uS7.